Here is a 2119-residue protein sequence, read N- to C-terminus: Outer kinetochore KNL1 complex subunit KNL1 (2119 aa).

Residues 1-59 form a disordered region; the sequence is MDGVYSEANEENDNTQRPVRRQHSSILKPPRSPLQDLKCGNQTNQEPNPPRKRKSSRRV. Positions 1-202 are may mediate oligomerization; that stretch reads MDGVYSEANE…SDNFIKRLKT (202 aa). Interaction with microtubules stretches follow at residues 17 to 34 and 53 to 80; these read RPVR…RSPL and RKSS…ERNS. Residues 23–80 form an interaction with PP1CA; contains the protein phosphatase 1 (PP1) interaction motifs SILK, RVXF and phi-phi region; the sequence is HSSILKPPRSPLQDLKCGNQTNQEPNPPRKRKSSRRVSFADTIKVFQTESHMKTERNS. Phosphoserine is present on residues S24, S32, and S60. An interaction with BUB1 region spans residues 124–140; sequence ENQMDLTASHTVMITKG. Residues 160-179 form an interaction with BUB1B region; it reads ENLKHHAANSRIKKDLACST. S538 carries the phosphoserine modification. Phosphothreonine is present on residues T540 and T739. Repeat unit 1 spans residues 723-827; that stretch reads DKTILFSEGN…MTKSHTVFID (105 aa). The 2 X 104 AA approximate repeats stretch occupies residues 723–1027; the sequence is DKTILFSEGN…VTRSHTVFID (305 aa). Phosphoserine occurs at positions 794 and 878. Repeat 2 spans residues 923-1027; the sequence is KSITFPENDK…VTRSHTVFID (105 aa). 2 positions are modified to phosphoserine: S1243 and S1464. The tract at residues 1557-1583 is disordered; sequence SQRESLPSENKTENCRAQKRTRVEEND. Basic and acidic residues predominate over residues 1566–1583; it reads NKTENCRAQKRTRVEEND. Positions 1577 to 1590 match the Nuclear localization signal motif; sequence TRVEENDVTNEKKI. S1616, S1627, and S1642 each carry phosphoserine. The interval 1763-1890 is required for interaction with ZWINT; the sequence is KVKDYSDEEL…FLEVETQKTQ (128 aa). A coiled-coil region spans residues 1799 to 1890; it reads VALYNKLVHS…FLEVETQKTQ (92 aa). The tract at residues 1873–2093 is interaction with NSL1, DSN1 and required for assembly into the outer kinetochore; it reads EEEELQRKFL…GKTGHDEIAA (221 aa).

Component of the KNL1 complex composed of KNL1 and ZWINT. Part of the ten-subunit outer kinetochore KMN network that includes the KNL1, MIS12 and NDC80 complexes; a bioriented kinetochore contains approximately 150 copies of the network. Interacts (via C-terminus) with the MIS12 complex subunits NSL1 (via C-terminus), PMF1 and DSN1; the interaction is direct. Interacts (via N-terminal region) with BUB1B (via BUB1 N-terminal domain); the interaction is direct and is required for cell cycle arrest upon activation of the mitotic spindle assembly checkpoint. Interacts (via N-terminal region) with BUB1 (via BUB1 N-terminal domain); the interaction is direct. Interacts with the protein phosphatase PP1 subunit PPP1CA; the interaction is direct and mutually exclusive with binding to microtubules. Interacts with the protein phosphatase PP1 subunit PPP1CC; the interaction is direct and mutually exclusive with binding to microtubules. Post-translationally, phosphorylation by AURKB negatively regulates its interaction with protein phosphatase 1 (PP1) subunit PPP1CA and with microtubules. Expressed in oocytes during meiotic progression (at protein level). Expressed during spermatogenesis.

The protein resides in the nucleus. The protein localises to the chromosome. It is found in the centromere. It localises to the kinetochore. Its subcellular location is the cytoplasm. Functionally, acts as a component of the outer kinetochore KNL1 complex that serves as a docking point for spindle assembly checkpoint components and mediates microtubule-kinetochore interactions. Kinetochores, consisting of a centromere-associated inner segment and a microtubule-contacting outer segment, play a crucial role in chromosome segregation by mediating the physical connection between centromeric DNA and spindle microtubules. The outer kinetochore is made up of the ten-subunit KMN network, comprising the MIS12, NDC80 and KNL1 complexes, and auxiliary microtubule-associated components; together they connect the outer kinetochore with the inner kinetochore, bind microtubules, and mediate interactions with mitotic checkpoint proteins that delay anaphase until chromosomes are bioriented on the spindle. Required for kinetochore binding by a distinct subset of kMAPs (kinetochore-bound microtubule-associated proteins) and motors. Acts in coordination with CENPK to recruit the NDC80 complex to the outer kinetochore. Can bind either to microtubules or to the protein phosphatase 1 (PP1) catalytic subunits PPP1CA and PPP1CC (via overlapping binding sites), it has higher affinity for PP1. Recruits MAD2L1 to the kinetochore and also directly links BUB1 and BUB1B to the kinetochore. In addition to orienting mitotic chromosomes, it is also essential for alignment of homologous chromosomes during meiotic metaphase I. In meiosis I, required to activate the spindle assembly checkpoint at unattached kinetochores to correct erroneous kinetochore-microtubule attachments. The protein is Outer kinetochore KNL1 complex subunit KNL1 of Mus musculus (Mouse).